The sequence spans 141 residues: Nucleoside diphosphate kinase (141 aa).

ATP is bound by residues K11, F59, R87, T93, R104, and N114. Catalysis depends on H117, which acts as the Pros-phosphohistidine intermediate.

Belongs to the NDK family. Homotetramer. It depends on Mg(2+) as a cofactor.

It localises to the cytoplasm. The catalysed reaction is a 2'-deoxyribonucleoside 5'-diphosphate + ATP = a 2'-deoxyribonucleoside 5'-triphosphate + ADP. It catalyses the reaction a ribonucleoside 5'-diphosphate + ATP = a ribonucleoside 5'-triphosphate + ADP. Its function is as follows. Major role in the synthesis of nucleoside triphosphates other than ATP. The ATP gamma phosphate is transferred to the NDP beta phosphate via a ping-pong mechanism, using a phosphorylated active-site intermediate. This is Nucleoside diphosphate kinase from Burkholderia cenocepacia (strain HI2424).